The primary structure comprises 72 residues: DNA gyrase inhibitor YacG (72 aa).

Residues cysteine 17, cysteine 20, cysteine 32, and cysteine 36 each contribute to the Zn(2+) site. The interval 52-72 (PGPEEDEMSYPPHSNDGNRSR) is disordered.

The protein belongs to the DNA gyrase inhibitor YacG family. In terms of assembly, interacts with GyrB. It depends on Zn(2+) as a cofactor.

Inhibits all the catalytic activities of DNA gyrase by preventing its interaction with DNA. Acts by binding directly to the C-terminal domain of GyrB, which probably disrupts DNA binding by the gyrase. This is DNA gyrase inhibitor YacG from Methylorubrum extorquens (strain CM4 / NCIMB 13688) (Methylobacterium extorquens).